We begin with the raw amino-acid sequence, 644 residues long: Exoribonuclease 2 (644 aa).

One can recognise an RNB domain in the interval 189 to 516 (REDLTALDFV…NHRLLKAVIK (328 aa)). In terms of domain architecture, S1 motif spans 561–643 (DTRFAAEIVD…ETRSIIARPV (83 aa)).

This sequence belongs to the RNR ribonuclease family. RNase II subfamily.

Its subcellular location is the cytoplasm. It catalyses the reaction Exonucleolytic cleavage in the 3'- to 5'-direction to yield nucleoside 5'-phosphates.. Involved in mRNA degradation. Hydrolyzes single-stranded polyribonucleotides processively in the 3' to 5' direction. The sequence is that of Exoribonuclease 2 from Escherichia coli (strain UTI89 / UPEC).